Consider the following 204-residue polypeptide: Molybdenum cofactor guanylyltransferase (204 aa).

GTP contacts are provided by residues 12-14 (LAG), lysine 25, asparagine 53, aspartate 71, and aspartate 101. Aspartate 101 is a Mg(2+) binding site.

This sequence belongs to the MobA family. As to quaternary structure, monomer. The cofactor is Mg(2+).

The protein resides in the cytoplasm. It catalyses the reaction Mo-molybdopterin + GTP + H(+) = Mo-molybdopterin guanine dinucleotide + diphosphate. Functionally, transfers a GMP moiety from GTP to Mo-molybdopterin (Mo-MPT) cofactor (Moco or molybdenum cofactor) to form Mo-molybdopterin guanine dinucleotide (Mo-MGD) cofactor. This is Molybdenum cofactor guanylyltransferase from Ralstonia nicotianae (strain ATCC BAA-1114 / GMI1000) (Ralstonia solanacearum).